The chain runs to 1017 residues: Protein HIRA (1017 aa).

2 WD repeats span residues 11–53 (HNGK…QEDD) and 68–107 (NHLA…GPST). Serine 111 is modified (phosphoserine). WD repeat units lie at residues 129–168 (NHSG…EILA), 172–211 (GHSG…LETS), 220–263 (GGTT…TNMD), 266–322 (GHRK…PLVV), and 326–367 (LFDK…DPLS). Positions 421-479 (REMGSATSVAGVVNGESLEDIRKNLLKKQVETRTADGRRRITPLCIAQLDTGDFSTAFF) are interaction with ASF1A. The tract at residues 421-729 (REMGSATSVA…RLKCNREGKE (309 aa)) is interaction with CCNA1. The segment at 439–475 (EDIRKNLLKKQVETRTADGRRRITPLCIAQLDTGDFS) is required for repression of histone gene transcription. Positions 494–509 (SSHSSPQLLPLDSSTP) are enriched in low complexity. The tract at residues 494-555 (SSHSSPQLLP…AALSPSVLTT (62 aa)) is disordered. A compositionally biased stretch (polar residues) spans 536–555 (KDSMNATSTPAALSPSVLTT). Position 549 is a phosphoserine (serine 549). Residue threonine 555 is modified to Phosphothreonine; by CDK2. A Phosphoserine modification is found at serine 557. Disordered stretches follow at residues 570–589 (TERS…TPTA) and 604–625 (PRDL…KASS). Threonine 576 bears the Phosphothreonine mark. Serine 584 bears the Phosphoserine mark. Position 586 is a phosphothreonine (threonine 586). The interval 593-826 (LKEQNLVKEL…LAGSDMTVSQ (234 aa)) is interaction with histone H2B. Interaction with PAX3 stretches follow at residues 594 to 739 (KEQN…SRIL) and 740 to 828 (TAAG…SQIL). A compositionally biased stretch (basic and acidic residues) spans 604–619 (PRDLLESSSDSDEKVP). Phosphoserine occurs at positions 610, 611, 612, 614, 661, 675, and 687. Positions 738–1017 (ILTAAGSCDV…QEQLDILRDK (280 aa)) are interaction with histone H4.

Belongs to the WD repeat HIR1 family. Interacts with histone H3-3B, PAX3 and PAX7. Interacts with histone H3.Y. Interacts with CCNA1, HIRIP3, NFU1/HIRIP5 and histone H2B. Part of a complex which includes ASF1A, CABIN1, histone H3.3, histone H4 and UBN1. Post-translationally, sumoylated. In terms of processing, phosphorylated by CDK2/CCNA1 and CDK2/CCNE1 on Thr-555 in vitro. Also phosphorylated on Thr-555 and Ser-687 in vivo. Expressed at high levels in kidney, pancreas and skeletal muscle and at lower levels in brain, heart, liver, lung, and placenta.

It is found in the nucleus. The protein localises to the PML body. Functionally, cooperates with ASF1A to promote replication-independent chromatin assembly. Required for the periodic repression of histone gene transcription during the cell cycle. Required for the formation of senescence-associated heterochromatin foci (SAHF) and efficient senescence-associated cell cycle exit. This Homo sapiens (Human) protein is Protein HIRA (HIRA).